We begin with the raw amino-acid sequence, 153 residues long: Putative pre-16S rRNA nuclease (153 aa).

The protein belongs to the YqgF nuclease family.

The protein localises to the cytoplasm. Its function is as follows. Could be a nuclease involved in processing of the 5'-end of pre-16S rRNA. The sequence is that of Putative pre-16S rRNA nuclease from Koribacter versatilis (strain Ellin345).